A 206-amino-acid polypeptide reads, in one-letter code: Ribosomal RNA large subunit methyltransferase E (206 aa).

Gly60, Trp62, Asp80, Asp96, and Asp121 together coordinate S-adenosyl-L-methionine. The Proton acceptor role is filled by Lys161.

It belongs to the class I-like SAM-binding methyltransferase superfamily. RNA methyltransferase RlmE family.

The protein localises to the cytoplasm. The catalysed reaction is uridine(2552) in 23S rRNA + S-adenosyl-L-methionine = 2'-O-methyluridine(2552) in 23S rRNA + S-adenosyl-L-homocysteine + H(+). Specifically methylates the uridine in position 2552 of 23S rRNA at the 2'-O position of the ribose in the fully assembled 50S ribosomal subunit. The sequence is that of Ribosomal RNA large subunit methyltransferase E from Stutzerimonas stutzeri (strain A1501) (Pseudomonas stutzeri).